The following is a 79-amino-acid chain: uncharacterized protein (79 aa).

The interval 20 to 52 (TERGAGLSPAAPPDPSPAIAPTMAEGGVPSPGP) is disordered.

This is an uncharacterized protein from Homo sapiens (Human).